Reading from the N-terminus, the 86-residue chain is Large ribosomal subunit protein bL31B (86 aa).

It belongs to the bacterial ribosomal protein bL31 family. Type B subfamily. As to quaternary structure, part of the 50S ribosomal subunit.

The sequence is that of Large ribosomal subunit protein bL31B from Saccharopolyspora erythraea (strain ATCC 11635 / DSM 40517 / JCM 4748 / NBRC 13426 / NCIMB 8594 / NRRL 2338).